Consider the following 393-residue polypeptide: N-lysine methyltransferase KMT5A (393 aa).

Residues 68-88 are disordered; the sequence is PGPEMVERRGPGRPRTDGENV. Residues 72-85 are compositionally biased toward basic and acidic residues; sequence MVERRGPGRPRTDG. Residue serine 100 is modified to Phosphoserine. Residues 134–163 are a coiled coil; that stretch reads RKREEKRNAGNAVRSAMKSEEQKIKDARKG. The tract at residues 135–241 is disordered; that stretch reads KREEKRNAGN…SRKSKAELQS (107 aa). Residues 150–162 are compositionally biased toward basic and acidic residues; the sequence is MKSEEQKIKDARK. Lysine 162 is modified (N6-acetyllysine). At threonine 181 the chain carries Phosphothreonine. A compositionally biased stretch (basic residues) spans 197 to 213; it reads ALKKPIKGKQAPRKKAQ. Positions 257–378 constitute an SET domain; the sequence is EGMKIDLIDG…AGEELLYDYG (122 aa). S-adenosyl-L-methionine contacts are provided by residues 267 to 269, tyrosine 312, and 339 to 340; these read KGR and NH.

Belongs to the class V-like SAM-binding methyltransferase superfamily. Histone-lysine methyltransferase family. PR/SET subfamily. In terms of assembly, interacts with L3MBTL1. As to quaternary structure, interacts with SIRT2 (phosphorylated form); the interaction is direct, stimulates KMT5A-mediated methyltransferase activity at histone H4 'Lys-20' (H4K20me1) and is increased in a H(2)O(2)-induced oxidative stress-dependent manner. In terms of processing, acetylated at Lys-162; does not affect methyltransferase activity. Deacetylated at Lys-162 possibly by SIRT2; does not change methyltransferase activity. Ubiquitinated and degraded by the DCX(DTL) complex.

Its subcellular location is the nucleus. The protein resides in the chromosome. It carries out the reaction L-lysyl(20)-[histone H4] + S-adenosyl-L-methionine = N(6)-methyl-L-lysyl(20)-[histone H4] + S-adenosyl-L-homocysteine + H(+). The enzyme catalyses L-lysyl-[protein] + S-adenosyl-L-methionine = N(6)-methyl-L-lysyl-[protein] + S-adenosyl-L-homocysteine + H(+). Its function is as follows. Protein-lysine N-methyltransferase that monomethylates both histones and non-histone proteins. Specifically monomethylates 'Lys-20' of histone H4 (H4K20me1). H4K20me1 is enriched during mitosis and represents a specific tag for epigenetic transcriptional repression. Mainly functions in euchromatin regions, thereby playing a central role in the silencing of euchromatic genes. Required for cell proliferation, probably by contributing to the maintenance of proper higher-order structure of DNA during mitosis. Involved in chromosome condensation and proper cytokinesis. Nucleosomes are preferred as substrate compared to free histones. Mediates monomethylation of p53/TP53 at 'Lys-382', leading to repress p53/TP53-target genes. Plays a negative role in TGF-beta response regulation and a positive role in cell migration. This Homo sapiens (Human) protein is N-lysine methyltransferase KMT5A.